The following is a 151-amino-acid chain: Neuroglobin (151 aa).

A Globin domain is found at 1–149 (MERPESELIR…VVQAMSRGWD (149 aa)). Positions 64 and 96 each coordinate heme b.

It belongs to the globin family. In terms of assembly, monomer. Homodimer and homotetramer; disulfide-linked. Mainly monomeric but also detected as part of homodimers and homotetramers. Interacts with 14-3-3 proteins; regulates the phosphorylation of NGB. Could interact (ferrous form) with G-alpha(i) proteins (GTP-bound form). Post-translationally, phosphorylated during hypoxia by ERK1/ERK2. Phosphorylation regulates the heme pocket hexacoordination preventing the association of His-64 with the heme metal center. Thereby, promotes the access of dioxygen and nitrite to the heme and stimulates the nitrite reductase activity. Phosphorylation during hypoxia is stabilized by 14-3-3 proteins. As to expression, widely distributed throughout the adult brain, including cerebral cortex, hippocampus, thalamus, hypothalamus, olfactory bulb, and cerebellum.

It is found in the cytoplasm. The protein resides in the cytosol. Its subcellular location is the mitochondrion matrix. The catalysed reaction is Fe(III)-heme b-[protein] + nitric oxide + H2O = Fe(II)-heme b-[protein] + nitrite + 2 H(+). In terms of biological role, monomeric globin with a bis-histidyl six-coordinate heme-iron atom through which it can bind dioxygen, carbon monoxide and nitric oxide. Could help transport oxygen and increase its availability to the metabolically active neuronal tissues, though its low quantity in tissues as well as its high affinity for dioxygen, which may limit its oxygen-releasing ability, argue against it. The ferrous/deoxygenated form exhibits a nitrite reductase activity and it could produce nitric oxide which in turn inhibits cellular respiration in response to hypoxia. In its ferrous/deoxygenated state, it may also exhibit GDI (Guanine nucleotide Dissociation Inhibitor) activity toward heterotrimeric G-alpha proteins, thereby regulating signal transduction to facilitate neuroprotective responses in the wake of hypoxia and associated oxidative stress. This chain is Neuroglobin, found in Rattus norvegicus (Rat).